Here is a 105-residue protein sequence, read N- to C-terminus: Multidrug resistance protein EbrA (105 aa).

The next 4 helical transmembrane spans lie at 2 to 22 (IAGY…AAML), 35 to 55 (VLVV…LQVI), 60 to 80 (SYAT…VLWF), and 87 to 104 (RNIA…LINL).

The protein belongs to the drug/metabolite transporter (DMT) superfamily. Small multidrug resistance (SMR) (TC 2.A.7.1) family. EbrA/EbrB subfamily. As to quaternary structure, the efflux pump is composed of EbrA and EbrB.

The protein resides in the cell membrane. Part of a multidrug efflux pump. Confers resistance to cationic lipophilic dyes such as ethidium bromide, acriflavine, pyronine Y and safranin O. The efflux is probably coupled to an influx of protons. This chain is Multidrug resistance protein EbrA (ebrA), found in Bacillus licheniformis (strain ATCC 14580 / DSM 13 / JCM 2505 / CCUG 7422 / NBRC 12200 / NCIMB 9375 / NCTC 10341 / NRRL NRS-1264 / Gibson 46).